The primary structure comprises 78 residues: HssA/B-like protein 29 (78 aa).

Residues 1-31 (MTLFSSITSISKTNTSSKSSLNSFSGSSLSM) are disordered.

It belongs to the hssA/B family.

The polypeptide is HssA/B-like protein 29 (hssl29) (Dictyostelium discoideum (Social amoeba)).